Here is a 101-residue protein sequence, read N- to C-terminus: NAD(P)H-quinone oxidoreductase subunit 4L, chloroplastic (101 aa).

The next 3 helical transmembrane spans lie at 2–22, 32–52, and 61–81; these read MFEH…YGLI, ICLE…SDLF, and IFAI…LSIL.

The protein belongs to the complex I subunit 4L family. As to quaternary structure, NDH is composed of at least 16 different subunits, 5 of which are encoded in the nucleus.

It is found in the plastid. The protein resides in the chloroplast thylakoid membrane. The catalysed reaction is a plastoquinone + NADH + (n+1) H(+)(in) = a plastoquinol + NAD(+) + n H(+)(out). It catalyses the reaction a plastoquinone + NADPH + (n+1) H(+)(in) = a plastoquinol + NADP(+) + n H(+)(out). Functionally, NDH shuttles electrons from NAD(P)H:plastoquinone, via FMN and iron-sulfur (Fe-S) centers, to quinones in the photosynthetic chain and possibly in a chloroplast respiratory chain. The immediate electron acceptor for the enzyme in this species is believed to be plastoquinone. Couples the redox reaction to proton translocation, and thus conserves the redox energy in a proton gradient. The protein is NAD(P)H-quinone oxidoreductase subunit 4L, chloroplastic of Agrostis stolonifera (Creeping bentgrass).